A 229-amino-acid chain; its full sequence is 5'-methylthioadenosine/S-adenosylhomocysteine nucleosidase (229 aa).

E12 (proton acceptor) is an active-site residue. Substrate-binding positions include G78, I152, and 173–174 (ME). The active-site Proton donor is the D197.

This sequence belongs to the PNP/UDP phosphorylase family. MtnN subfamily.

It carries out the reaction S-adenosyl-L-homocysteine + H2O = S-(5-deoxy-D-ribos-5-yl)-L-homocysteine + adenine. The catalysed reaction is S-methyl-5'-thioadenosine + H2O = 5-(methylsulfanyl)-D-ribose + adenine. It catalyses the reaction 5'-deoxyadenosine + H2O = 5-deoxy-D-ribose + adenine. It participates in amino-acid biosynthesis; L-methionine biosynthesis via salvage pathway; S-methyl-5-thio-alpha-D-ribose 1-phosphate from S-methyl-5'-thioadenosine (hydrolase route): step 1/2. In terms of biological role, catalyzes the irreversible cleavage of the glycosidic bond in both 5'-methylthioadenosine (MTA) and S-adenosylhomocysteine (SAH/AdoHcy) to adenine and the corresponding thioribose, 5'-methylthioribose and S-ribosylhomocysteine, respectively. Also cleaves 5'-deoxyadenosine, a toxic by-product of radical S-adenosylmethionine (SAM) enzymes, into 5-deoxyribose and adenine. This Histophilus somni (strain 129Pt) (Haemophilus somnus) protein is 5'-methylthioadenosine/S-adenosylhomocysteine nucleosidase.